The following is a 238-amino-acid chain: Probable transcriptional regulatory protein YeeN (238 aa).

Belongs to the TACO1 family. YeeN subfamily.

It is found in the cytoplasm. This is Probable transcriptional regulatory protein YeeN from Shigella sonnei (strain Ss046).